Reading from the N-terminus, the 101-residue chain is MTSKLAVALLAAFVLSAALCEAAVLSRVSSELRCQCIKTHSTPFHPKYIKELRVIDSGPHCENSEIIVKLFNGNEVCLDPKEKWVQKVVQIFLKKAEKQDP.

An N-terminal signal peptide occupies residues methionine 1–alanine 22. The residue at position 27 (arginine 27) is a Citrulline. Cystine bridges form between cysteine 34-cysteine 61 and cysteine 36-cysteine 77.

This sequence belongs to the intercrine alpha (chemokine CxC) family. In terms of assembly, homodimer. Interacts with TNFAIP6 (via Link domain); this interaction interferes with chemokine binding to glycosaminoglycans. Post-translationally, citrullination at Arg-27 prevents proteolysis, and dampens tissue inflammation, it also enhances leukocytosis, possibly through impaired chemokine clearance from the blood circulation.

The protein resides in the secreted. Chemotactic factor that mediates inflammatory response by attracting neutrophils, basophils, and T-cells to clear pathogens and protect the host from infection. Also plays an important role in neutrophil activation. Released in response to an inflammatory stimulus, exerts its effect by binding to the G-protein-coupled receptors CXCR1 and CXCR2, primarily found in neutrophils, monocytes and endothelial cells. G-protein heterotrimer (alpha, beta, gamma subunits) constitutively binds to CXCR1/CXCR2 receptor and activation by IL8 leads to beta and gamma subunits release from Galpha (GNAI2 in neutrophils) and activation of several downstream signaling pathways including PI3K and MAPK pathways. In Canis lupus familiaris (Dog), this protein is Interleukin-8 (CXCL8).